Consider the following 245-residue polypeptide: tRNA pseudouridine synthase A (245 aa).

The active-site Nucleophile is the aspartate 52. Substrate is bound at residue tyrosine 111.

Belongs to the tRNA pseudouridine synthase TruA family. In terms of assembly, homodimer.

The catalysed reaction is uridine(38/39/40) in tRNA = pseudouridine(38/39/40) in tRNA. In terms of biological role, formation of pseudouridine at positions 38, 39 and 40 in the anticodon stem and loop of transfer RNAs. The protein is tRNA pseudouridine synthase A of Rickettsia canadensis (strain McKiel).